The chain runs to 106 residues: Ferredoxin (106 aa).

Positions 9 and 17 each coordinate [3Fe-4S] cluster. The [4Fe-4S] cluster site is built by Cys21, Cys40, Cys43, and Cys46. The 4Fe-4S ferredoxin-type domain occupies 31-60 (RMLYIHPDECVDCGACEPVCPVEAIYYEDD). Residue Cys50 participates in [3Fe-4S] cluster binding. A disordered region spans residues 84 to 106 (GAAKVGKVDRDVEPVSSLPPQGE).

[4Fe-4S] cluster serves as cofactor. The cofactor is [3Fe-4S] cluster.

Functionally, ferredoxins are iron-sulfur proteins that transfer electrons in a wide variety of metabolic reactions. The sequence is that of Ferredoxin (fdxA) from Saccharopolyspora erythraea (Streptomyces erythraeus).